Reading from the N-terminus, the 309-residue chain is Short-chain dehydrogenase/reductase ARMGADRAFT_1048226 (309 aa).

NADP(+) is bound by residues K64, D86, N113, and K145. S167 functions as the Proton donor in the catalytic mechanism. Y196 and K200 together coordinate NADP(+). The active-site Proton acceptor is the Y196. The Lowers pKa of active site Tyr role is filled by K200.

The protein belongs to the short-chain dehydrogenases/reductases (SDR) family.

Its pathway is secondary metabolite biosynthesis. In terms of biological role, short-chain dehydrogenase/reductase, part of the gene cluster that mediates the biosynthesis of melleolides, a range of antifungal and phytotoxic polyketide derivatives composed of an orsellinic acid (OA) moiety esterified to various sesquiterpene alcohols. The first step in melleolides biosynthesis is performed by the delta(6)-protoilludene synthase PRO1 which catalyzes the cyclization of farnesyl diphosphate to protoilludene. The orsellinic acid synthase armB produces OA by condensing acetyl-CoA with 3 malonyl-CoA units in a three-round chain elongation reaction folowed by a C2-C7 ring closure. ArmB further catalyzes the trans-esterification of OA to the various sesquiterpene alcohols resulting from the hydroxylation of protoilludene. The melleolides cluster also includes 5 cytochrome P450 monooxygenases, 4 NAD(+)-dependent oxidoreductases, one flavin-dependent oxidoreductase, and one O-methyltransferase. The cytochrome P450 monooxygenases may be involved in protoilludene hydroxylation to elaborate melleolides with multiple alcohol groups, such as melleolide D, which carries alcohol functionalities at C-4, C-5, C-10, and C-13. The role of the NAD(+)-dependent enzymes remains unknown. Numerous melleolides, including arnamial, show 5'-O-methylation of the aromatic moiety which may be catalyzed by the methyltransferase encoded in the cluster. The flavin-dependent oxidoreductase might represent the dehydrogenase yielding the aldehyde in position 1 of arnamial and other melleolides. Finally, several halogenase localized outside of the cluster, are able to catalyze the transfer of a single chlorine atom to the melleolide backbone, resulting in a 6'-chloromelleolide product. The sequence is that of Short-chain dehydrogenase/reductase ARMGADRAFT_1048226 from Armillaria gallica (Bulbous honey fungus).